Here is a 158-residue protein sequence, read N- to C-terminus: MNVLIDNRQTKVDASGLEALVVRAIKATLEEEEVVDEVEVSVSFVDNEEIRKLNKYYRGIDSSTDVLSFPLMEFEEIEEGEEDEKDAEEIYPIGDIVISLEKAKEQAEEYGHSFEREVAYLTVHSMLHLLGYDHETEEERKLMREKEEKVMERLGLRR.

Residues His-124, His-128, and His-134 each contribute to the Zn(2+) site.

The protein belongs to the endoribonuclease YbeY family. The cofactor is Zn(2+).

The protein resides in the cytoplasm. Its function is as follows. Single strand-specific metallo-endoribonuclease involved in late-stage 70S ribosome quality control and in maturation of the 3' terminus of the 16S rRNA. The protein is Endoribonuclease YbeY of Caldanaerobacter subterraneus subsp. tengcongensis (strain DSM 15242 / JCM 11007 / NBRC 100824 / MB4) (Thermoanaerobacter tengcongensis).